A 265-amino-acid polypeptide reads, in one-letter code: Energy-coupling factor transporter ATP-binding protein EcfA1 (265 aa).

The 235-residue stretch at 2–236 (IKIKNLVFRY…KEIVELAKID (235 aa)) folds into the ABC transporter domain. ATP is bound at residue 36–43 (GHNGSGKS).

The protein belongs to the ABC transporter superfamily. Energy-coupling factor EcfA family. In terms of assembly, forms a stable energy-coupling factor (ECF) transporter complex composed of 2 membrane-embedded substrate-binding proteins (S component), 2 ATP-binding proteins (A component) and 2 transmembrane proteins (T component).

Its subcellular location is the cell membrane. Functionally, ATP-binding (A) component of a common energy-coupling factor (ECF) ABC-transporter complex. Unlike classic ABC transporters this ECF transporter provides the energy necessary to transport a number of different substrates. This chain is Energy-coupling factor transporter ATP-binding protein EcfA1, found in Mycoplasmopsis pulmonis (strain UAB CTIP) (Mycoplasma pulmonis).